The following is a 102-amino-acid chain: Parathymosin (102 aa).

Positions 1-102 (MSEKSVEAAA…RQKTENGASA (102 aa)) are disordered. N-acetylserine is present on serine 2. Serine 2 is modified (phosphoserine). An N6-acetyllysine modification is found at lysine 4. Residues serine 5 and serine 13 each carry the phosphoserine modification. The span at 13-37 (SAKDLKEKKDKVEEKAGRKERKKEV) shows a compositional bias: basic and acidic residues. Lysine 15 carries the post-translational modification N6-acetyllysine. Residues 38 to 75 (VEEEENGAEEEEEETAEDGEDDDEGDEEDEEEEEEEDE) show a composition bias toward acidic residues. At threonine 52 the chain carries Phosphothreonine. Lysine 92 is subject to N6-acetyllysine.

This sequence belongs to the pro/parathymosin family.

Functionally, parathymosin may mediate immune function by blocking the effect of prothymosin alpha which confers resistance to certain opportunistic infections. The protein is Parathymosin (Ptms) of Rattus norvegicus (Rat).